The chain runs to 257 residues: High-affinity copper transporter ctrC (257 aa).

Transmembrane regions (helical) follow at residues 79 to 99 (RGMF…LEFL) and 202 to 222 (YFNG…SFIF).

It belongs to the copper transporter (Ctr) (TC 1.A.56) family. SLC31A subfamily.

It localises to the cell membrane. The enzyme catalyses Cu(2+)(in) = Cu(2+)(out). In terms of biological role, high-affinity copper transporter of plasma membrane that mediates copper uptake under low copper conditions. The mechanism driving the transmembrane transport of copper has still to be determined. Acts as a potential virulence factor. The chain is High-affinity copper transporter ctrC from Aspergillus fumigatus (strain ATCC MYA-4609 / CBS 101355 / FGSC A1100 / Af293) (Neosartorya fumigata).